The following is a 223-amino-acid chain: MELTLHEARVIGCLLEKEITTPEQYPLSLNSLTLACNQKTSREPVLELSETQVQIAVDSLNRKRLISEQSGFGSRVVKYKHRFCNTEFSELQLSPAALAIVCLLLLRGPQTPGELRTRSNRLHEFKDVIEVEDCIRQLMNREKPFLKQLPREAGRRESRYVELFSAASSQLETAQPESASHTVAHVAVSLDAEPLELTKRVTELEQQVAELTQKLDELIASLS.

It belongs to the UPF0502 family.

The chain is UPF0502 protein Sbal_1765 from Shewanella baltica (strain OS155 / ATCC BAA-1091).